Reading from the N-terminus, the 486-residue chain is Receptor-interacting serine/threonine-protein kinase 3 (486 aa).

At Ser-2 the chain carries Phosphoserine. The Protein kinase domain occupies 22-292; the sequence is LKKLEFVGKG…DCEPKTNEVY (271 aa). ATP-binding positions include 28–36 and Lys-51; that span reads VGKGGFGVV. Asp-143 (proton acceptor) is an active-site residue. The residue at position 165 (Ser-165) is a Phosphoserine. Thr-187 carries the post-translational modification Phosphothreonine. Ser-204 is modified (phosphoserine; by autocatalysis). Phosphothreonine; by autocatalysis is present on Thr-231. The residue at position 232 (Ser-232) is a Phosphoserine; by autocatalysis. Position 257 is a phosphothreonine (Thr-257). Ser-304 and Ser-326 each carry phosphoserine. The interval 312-333 is disordered; that stretch reads QHRSSGRNLSAREPSQRGTEMD. Position 338 is a phosphothreonine (Thr-338). The interval 349–388 is disordered; the sequence is LEEPSGPVPGKCPERQAQDTSVGPATPARTSSDPVAGTPQ. A phosphoserine mark is found at Ser-353, Ser-369, and Ser-380. Over residues 366-381 the composition is skewed to polar residues; it reads QDTSVGPATPARTSSD. Thr-392 is modified (phosphothreonine). Residues 440–461 carry the RIP homotypic interaction motif (RHIM) motif; the sequence is LVFNNCSEVQIGNYNSLVAPPR. The segment at 462 to 486 is disordered; the sequence is TTASSSAKYDQAQFGRGRGWQPFHK. Residue Arg-477 is modified to Omega-N-methylarginine.

The protein belongs to the protein kinase superfamily. TKL Ser/Thr protein kinase family. As to quaternary structure, interacts (via RIP homotypic interaction motif) with RIPK1 (via RIP homotypic interaction motif); this interaction induces RIPK1 phosphorylation and formation of a RIPK1-RIPK3 necrosis-inducing complex. Interacts with MLKL; the interaction is direct and triggers necroptosis. Interacts with ZBP1 (via RIP homotypic interaction motif); interaction with ZBP1 activates RIPK3, triggering necroptosis. Upon TNF-induced necrosis, the RIPK1-RIPK3 dimer further interacts with PGAM5 and MLKL; the formation of this complex leads to PGAM5 phosphorylation and increase in PGAM5 phosphatase activity. Binds TRAF2 and is recruited to the TNFR-1 signaling complex. Interacts with PYGL, GLUL and GLUD1; these interactions result in activation of these metabolic enzymes. Interacts with BIRC2/c-IAP1, BIRC3/c-IAP2 and XIAP/BIRC4. Interacts with ARHGEF2. Interacts with PELI1 (via atypical FHA domain); the phosphorylated form at Thr-187 binds preferentially to PELI1. Interacts with BUB1B, TRAF2 and STUB1. Interacts with CASP6. Component of the AIM2 PANoptosome complex, a multiprotein complex that drives inflammatory cell death (PANoptosis). (Microbial infection) Interacts (via RIP homotypic interaction motif) with murid herpesvirus protein RIR1; this interaction disrupts RIP3-RIP1 interactions characteristic of TNF-alpha induced necroptosis, thereby suppressing this death pathway. Post-translationally, RIPK1 and RIPK3 undergo reciprocal auto- and trans-phosphorylation. Autophosphorylated following interaction with ZBP1. Phosphorylation of Ser-204 plays a role in the necroptotic function of RIPK3. Autophosphorylates at Thr-231 and Ser-232 following activation by ZBP1: phosphorylation at these sites is a hallmark of necroptosis and is required for binding MLKL. Phosphorylation at Thr-187 is important for its kinase activity, interaction with PELI1 and for its ability to mediate TNF-induced necroptosis. Polyubiquitinated with 'Lys-48' and 'Lys-63'-linked chains by BIRC2/c-IAP1 and BIRC3/c-IAP2, leading to activation of NF-kappa-B. Ubiquitinated by STUB1 leading to its subsequent proteasome-dependent degradation. In terms of tissue distribution, expressed in embryo and in adult spleen, liver, testis, heart, brain and lung.

It localises to the cytoplasm. Its subcellular location is the cytosol. It is found in the nucleus. The catalysed reaction is L-seryl-[protein] + ATP = O-phospho-L-seryl-[protein] + ADP + H(+). It carries out the reaction L-threonyl-[protein] + ATP = O-phospho-L-threonyl-[protein] + ADP + H(+). With respect to regulation, activity is stimulated by ZBP1, which senses double-stranded Z-RNA structures. RIPK3-dependent necroptosis is inhibited by RIPK1: RIPK1 prevents the ZBP1-induced activation of RIPK3 via FADD-mediated recruitment of CASP8, which cleaves RIPK1 and limits TNF-induced necroptosis. Inhibited by type II inhibitor 1-(4-fluorophenyl)-N-[3-fluoro-4-(1H-pyrrolo[2,3-b]pyridin-4-yloxy)phenyl]-2-oxo-1,2-dihydropyridine-3-carboxamide. Functionally, serine/threonine-protein kinase that activates necroptosis and apoptosis, two parallel forms of cell death. Necroptosis, a programmed cell death process in response to death-inducing TNF-alpha family members, is triggered by RIPK3 following activation by ZBP1. Activated RIPK3 forms a necrosis-inducing complex and mediates phosphorylation of MLKL, promoting MLKL localization to the plasma membrane and execution of programmed necrosis characterized by calcium influx and plasma membrane damage. In addition to TNF-induced necroptosis, necroptosis can also take place in the nucleus in response to orthomyxoviruses infection: following ZBP1 activation, which senses double-stranded Z-RNA structures, nuclear RIPK3 catalyzes phosphorylation and activation of MLKL, promoting disruption of the nuclear envelope and leakage of cellular DNA into the cytosol. Also regulates apoptosis: apoptosis depends on RIPK1, FADD and CASP8, and is independent of MLKL and RIPK3 kinase activity. Phosphorylates RIPK1: RIPK1 and RIPK3 undergo reciprocal auto- and trans-phosphorylation. In some cell types, also able to restrict viral replication by promoting cell death-independent responses. In response to flavivirus infection in neurons, promotes a cell death-independent pathway that restricts viral replication: together with ZBP1, promotes a death-independent transcriptional program that modifies the cellular metabolism via up-regulation expression of the enzyme ACOD1/IRG1 and production of the metabolite itaconate. Itaconate inhibits the activity of succinate dehydrogenase, generating a metabolic state in neurons that suppresses replication of viral genomes. RIPK3 binds to and enhances the activity of three metabolic enzymes: GLUL, GLUD1, and PYGL. These metabolic enzymes may eventually stimulate the tricarboxylic acid cycle and oxidative phosphorylation, which could result in enhanced ROS production. This Mus musculus (Mouse) protein is Receptor-interacting serine/threonine-protein kinase 3.